The sequence spans 370 residues: Pantothenate kinase 3 (370 aa).

Glu-138 serves as the catalytic Proton acceptor. Residues Ser-192, Ser-195, and Arg-207 each coordinate acetyl-CoA.

Belongs to the type II pantothenate kinase family. Homodimer. Highly expressed in the liver.

Its subcellular location is the cytoplasm. The enzyme catalyses (R)-pantothenate + ATP = (R)-4'-phosphopantothenate + ADP + H(+). It functions in the pathway cofactor biosynthesis; coenzyme A biosynthesis; CoA from (R)-pantothenate: step 1/5. Subject to allosteric regulation, exists in two distinct conformational states, a catalytically incompetent (or open) conformation stabilized by the binding of acetyl(acyl)-CoA, and a catalytically competent (or closed) conformation stabilized by ATP-binding. Acetyl-CoA and its thioesters act as allosteric inhibitors and compete with the ATP-binding site. Strongly inhibited by acetyl-CoA, malonyl-CoA and palmitoyl CoA and modestly inhibited by CoA. Inhibited by calcium hopantenate. Its function is as follows. Catalyzes the phosphorylation of pantothenate to generate 4'-phosphopantothenate in the first and rate-determining step of coenzyme A (CoA) synthesis. The polypeptide is Pantothenate kinase 3 (Pank3) (Mus musculus (Mouse)).